Reading from the N-terminus, the 144-residue chain is Transcription antitermination protein NusB (144 aa).

This sequence belongs to the NusB family.

Its function is as follows. Involved in transcription antitermination. Required for transcription of ribosomal RNA (rRNA) genes. Binds specifically to the boxA antiterminator sequence of the ribosomal RNA (rrn) operons. The chain is Transcription antitermination protein NusB from Buchnera aphidicola subsp. Baizongia pistaciae (strain Bp).